The sequence spans 496 residues: Probable G-protein coupled receptor K01A12.3 (496 aa).

Residues 1 to 19 (MESVTRHRADMISFFTFDS) lie on the Extracellular side of the membrane. A helical transmembrane segment spans residues 20 to 40 (YISIVGVAYTAVGLLGVFCNV). Residues 41–58 (TTVIMILTNRVFRLSAYT) are Cytoplasmic-facing. A helical transmembrane segment spans residues 59–79 (IMANVALADSIVMLIAGVACG). Over 80–128 (MDVMWPNPNDLTSFIPSLEEPYQKIAPVSLRNDSKTDSSAAGFETGNIH) the chain is Extracellular. Residue asparagine 111 is glycosylated (N-linked (GlcNAc...) asparagine). A helical transmembrane segment spans residues 129–149 (AVLSFSFVAAWTAGVISYAML). The Cytoplasmic portion of the chain corresponds to 150–169 (GTNRCIAICYYGTKARALNQ). Residues 170-190 (VSVAVACSASTWIVGIAAALV) form a helical membrane-spanning segment. At 191 to 216 (GTLSQPMIGIQRTMWSISFLEPRPHT) the chain is on the extracellular side. Residues 217–237 (TLFFTLLCAANLLGLGAQWVC) traverse the membrane as a helical segment. Over 238–285 (STLVLLKIRQVKKKISKNKLNQNSANRFRKQVILALNEIIVTGNFKAR) the chain is Cytoplasmic. Residues 286–306 (LTFQFFYPSILCTISTFLFFI) traverse the membrane as a helical segment. Residues 307-318 (KPYAFEYLSGWQ) are Extracellular-facing. The chain crosses the membrane as a helical span at residues 319–339 (LVILHLLWLCNHTCNPFIYAY). Over 340–496 (FNDRMRLTYK…WVKFAKKASI (157 aa)) the chain is Cytoplasmic. The tract at residues 451–470 (TKELESAHNQGGSSRFDSER) is disordered.

The protein belongs to the G-protein coupled receptor 1 family.

It is found in the cell membrane. This chain is Probable G-protein coupled receptor K01A12.3, found in Caenorhabditis elegans.